Here is a 980-residue protein sequence, read N- to C-terminus: Putative helicase 087L (980 aa).

In terms of domain architecture, Helicase ATP-binding spans 59-246; that stretch reads INPHTLYDGV…IDLFNLILRT (188 aa). 72–79 contacts ATP; it reads HEMGTGKT. The short motif at 189 to 192 is the DEAH box element; sequence DEAH. The 158-residue stretch at 389-546 folds into the Helicase C-terminal domain; the sequence is RLSFVFSEFV…SIDLHMYEIA (158 aa).

This sequence belongs to the IIV-6 022L family. SNF2/RAD54 helicase subfamily.

The sequence is that of Putative helicase 087L from Invertebrate iridescent virus 3 (IIV-3).